The following is a 548-amino-acid chain: Undecaprenyl phosphate-alpha-4-amino-4-deoxy-L-arabinose arabinosyl transferase 1 (548 aa).

The next 12 helical transmembrane spans lie at 11 to 31 (WLLF…TRLL), 89 to 109 (IVVV…AMVV), 114 to 134 (ALAF…AIGT), 137 to 157 (ILDP…LVAL), 180 to 200 (FLTK…VMAI), 214 to 234 (IALL…ALQA), 263 to 283 (FYIP…FGAL), 292 to 312 (GTLY…ASKG), 314 to 334 (LLTY…HYIE), 347 to 367 (VNAS…IYSL), 382 to 402 (KIVL…GALF), and 405 to 425 (TQFL…YAIP).

This sequence belongs to the glycosyltransferase 83 family.

The protein resides in the cell inner membrane. The enzyme catalyses 4-amino-4-deoxy-alpha-L-arabinopyranosyl di-trans,octa-cis-undecaprenyl phosphate + lipid IVA = lipid IIA + di-trans,octa-cis-undecaprenyl phosphate.. It functions in the pathway lipopolysaccharide metabolism; 4-amino-4-deoxy-beta-L-arabinose-lipid A biosynthesis. Functionally, catalyzes the transfer of the L-Ara4N moiety of the glycolipid undecaprenyl phosphate-alpha-L-Ara4N to lipid A. The modified arabinose is attached to lipid A and is required for resistance to polymyxin and cationic antimicrobial peptides. This Proteus mirabilis (strain HI4320) protein is Undecaprenyl phosphate-alpha-4-amino-4-deoxy-L-arabinose arabinosyl transferase 1.